The sequence spans 466 residues: SVGFKAGVKEYKLTYYTPEYETKDTDILAAFRVTPQPGVPPEEAGAAVAAESSTGTWTTVWTDGLTSLDRYKGRCYHIEPVPGEEDQYIAYVAYPLDLFEEGSVTNMLTSIVGNVFGFKALRALRLEDLRIPPAYIKTFQGPPHGIQVERDKLNKYGRPLLGCTIKPKLGLSAKNYGRAVYECLRGGLDFTKDDENVNSQPFMRWRDRFLFCAEAIFKAQAETGEIKGHYLNATAGTCEEMYKRAVFARELGAPIVMHDYLTGGFTANTSLAHYCRDNGLLLHIHRAMHAVIDRQKNHGMHFRVLAKALRMSGGDHIHAGTVVGKLEGERDITLGFVDLLRDDFIEKDRSRGIYFTQDWVSLPGVLAVASGGIHVWHMPALTEIFGDDSVLQFGGGTLGHPWGNAPGAVANRVALEACVQARNEGRDLAVEGNEIIREASKWSPELAAACEVWKEIRFNFKAVDTL.

Residue Lys5 is modified to N6,N6,N6-trimethyllysine. The substrate site is built by Asn114 and Thr164. Lys166 serves as the catalytic Proton acceptor. Position 168 (Lys168) interacts with substrate. Residues Lys192, Asp194, and Glu195 each contribute to the Mg(2+) site. At Lys192 the chain carries N6-carboxylysine. His285 functions as the Proton acceptor in the catalytic mechanism. Residues Arg286, His318, and Ser370 each coordinate substrate.

Belongs to the RuBisCO large chain family. Type I subfamily. As to quaternary structure, heterohexadecamer of 8 large chains and 8 small chains; disulfide-linked. The disulfide link is formed within the large subunit homodimers. It depends on Mg(2+) as a cofactor. Post-translationally, the disulfide bond which can form in the large chain dimeric partners within the hexadecamer appears to be associated with oxidative stress and protein turnover.

Its subcellular location is the plastid. The protein resides in the chloroplast. It carries out the reaction 2 (2R)-3-phosphoglycerate + 2 H(+) = D-ribulose 1,5-bisphosphate + CO2 + H2O. The catalysed reaction is D-ribulose 1,5-bisphosphate + O2 = 2-phosphoglycolate + (2R)-3-phosphoglycerate + 2 H(+). Functionally, ruBisCO catalyzes two reactions: the carboxylation of D-ribulose 1,5-bisphosphate, the primary event in carbon dioxide fixation, as well as the oxidative fragmentation of the pentose substrate in the photorespiration process. Both reactions occur simultaneously and in competition at the same active site. This is Ribulose bisphosphate carboxylase large chain from Adenium obesum (Desert rose).